The sequence spans 751 residues: Fusarisetin A cluster transcription factor fsa6 (751 aa).

Residues 1 to 35 are disordered; the sequence is MADQAQDVRPTEWGPGKTPQGRARLPSSRPREKPQ. Residues 38–66 constitute a DNA-binding region (zn(2)-C6 fungal-type); sequence CNLCRRRKLRCDRQRPCSSCAQRELGLSC. The segment covering 107–116 has biased composition (polar residues); that stretch reads NVNAQDQVGA. The disordered stretch occupies residues 107 to 153; sequence NVNAQDQVGATPSPRGQPRGPDYPTPAAVHAPSTNEEPVSAAVSPAD.

It is found in the nucleus. In terms of biological role, transcription factor that regulates the expression of the gene cluster that mediates the biosynthesis of fusarisetin A. The protein is Fusarisetin A cluster transcription factor fsa6 of Fusarium sp. (strain FN080326).